The following is a 596-amino-acid chain: MKTLTFFGPKYGTQVSLLSPNVVSKLSRFPLTSFARKPTKPVCVKTTDCDLVESQRTFNKFPRSDWGDHFLRLPFNVSDMDMLTIEMNALKSTIRKMLMYSQDVEETKERILIIYLLVALGMAYHFEDEIDDNLKHGFENIETTMAGENDLSTVSVMFWVFRTYGYNLSSDMFRRFKGEDGKFEECHTKDVKGLLSLYEAAQLGTSTEDILDEAMSFSSSHLECLAGGTCPPHISRLIQNELYMPQHHNAEILFASEYISFYKQEDVHNKVLLEFAKLNFKFLQLHWIHELKILTKWWNDQDLLSKLPPYFRDRMVECHLYAVIYYFEPQYSFGRIMLAKLLVLLTVVDDTCDRYGSVPEVAKLLDCVERWDPELGESLPDYLKTVFKFTLDVFEDCERAGKSEEGLSFNVDGALAEWAAAEKVPTVEEYLEVGGVAVTMYATIALGLLGLGPKAREHGYEWLKSRPKLVHDLATKGRLMNDMGGFKDDIGRGFLANVVNYYMKEYGTTEEETYKEFHKIVRDLEKSVNSEFLKINKGVPREILSRALNCGKMIDVTYRSGDGYTRPRGKFTEYVESLFVEHMDAPVMQYASSSTL.

Positions 349, 353, 481, and 489 each coordinate Mg(2+). The short motif at 349 to 353 (DDTCD) is the DDXXD motif element.

This sequence belongs to the terpene synthase family. Tpsa subfamily. Requires Mg(2+) as cofactor. Mn(2+) serves as cofactor.

The protein localises to the cytoplasm. It functions in the pathway secondary metabolite biosynthesis; terpenoid biosynthesis. The polypeptide is Putative terpenoid synthase 5 (TPS05) (Arabidopsis thaliana (Mouse-ear cress)).